The sequence spans 217 residues: Octanoyltransferase (217 aa).

A BPL/LPL catalytic domain is found at S32–H207. Substrate contacts are provided by residues R71–H78, S138–G140, and G151–A153. C169 functions as the Acyl-thioester intermediate in the catalytic mechanism.

This sequence belongs to the LipB family.

The protein resides in the cytoplasm. It catalyses the reaction octanoyl-[ACP] + L-lysyl-[protein] = N(6)-octanoyl-L-lysyl-[protein] + holo-[ACP] + H(+). Its pathway is protein modification; protein lipoylation via endogenous pathway; protein N(6)-(lipoyl)lysine from octanoyl-[acyl-carrier-protein]: step 1/2. Catalyzes the transfer of endogenously produced octanoic acid from octanoyl-acyl-carrier-protein onto the lipoyl domains of lipoate-dependent enzymes. Lipoyl-ACP can also act as a substrate although octanoyl-ACP is likely to be the physiological substrate. This Shewanella baltica (strain OS223) protein is Octanoyltransferase.